A 539-amino-acid chain; its full sequence is Lysosomal cobalamin transport escort protein LMBD1 (539 aa).

Topologically, residues 1–7 (MATGSTE) are extracellular. A helical transmembrane segment spans residues 8–28 (LLIGWCIFGVLLLAILAFCWV). The Cytoplasmic segment spans residues 29–47 (YVRKYQSHQESEVISTITA). Residues 48–68 (ISSLAIALITSALLPVDIFLV) form a helical membrane-spanning segment. The Extracellular portion of the chain corresponds to 69–98 (SFMKNHNGTFKDWAESNTTRLQIENTVLIG). 2 N-linked (GlcNAc...) asparagine glycosylation sites follow: asparagine 75 and asparagine 85. Residues 99-119 (YYTLYSIILFCVFLWIPFVYF) traverse the membrane as a helical segment. At 120–142 (YYEEKDDTDGSQCSQIANAFKYT) the chain is on the cytoplasmic side. The helical transmembrane segment at 143-163 (SGFILVCSCLLLIGAFAPLDI) threads the bilayer. Residues 164–186 (HTNKNSTDLDKIKLLFLELGSSN) are Extracellular-facing. A glycan (N-linked (GlcNAc...) asparagine) is linked at asparagine 168. A helical membrane pass occupies residues 187–207 (GLAALSFSISSLTLIGMLAAI). At 208–303 (TYTAYGMSAL…KCCIVIRPFK (96 aa)) the chain is on the cytoplasmic side. A helical membrane pass occupies residues 304 to 324 (IIWGILFILVALLFIVSLFLS). Residues 325-362 (NLDKALHSAGIDSGFIIFGTNLTNPLNMLLPVLQTVFP) are Extracellular-facing. Residue asparagine 345 is glycosylated (N-linked (GlcNAc...) asparagine). The chain crosses the membrane as a helical span at residues 363-383 (LDYIFITIITMYFIFTSMAGI). Residues 384 to 406 (RNMGIWFFWIRLYKIRRRRTRPQ) are Cytoplasmic-facing. A helical transmembrane segment spans residues 407–427 (ALLFLCMILLLIVLHTSYMIY). Residues 428-484 (SLAPQYVMYGSQKYLWENNSTQETAIGNSSASVLKDCDASAPEDQCTVTRTYLFLHK) lie on the Extracellular side of the membrane. Residues asparagine 445, asparagine 446, and asparagine 455 are each glycosylated (N-linked (GlcNAc...) asparagine). A helical transmembrane segment spans residues 485–505 (FWFFSSIYYFGNWAFIVVFVI). Topologically, residues 506 to 539 (GLIVSCCKGKKSVIEGEVEDDDSDLSDDEEHPYA) are cytoplasmic.

Belongs to the LIMR family. LMBRD1 subfamily.

The protein resides in the endoplasmic reticulum membrane. Its subcellular location is the lysosome membrane. The protein localises to the cell membrane. In terms of biological role, lysosomal membrane chaperone required to export cobalamin (vitamin B12) from the lysosome to the cytosol, allowing its conversion to cofactors. Targets ABCD4 transporter from the endoplasmic reticulum to the lysosome. Then forms a complex with lysosomal ABCD4 and cytoplasmic MMACHC to transport cobalamin across the lysosomal membrane. May play a role in mediating and regulating the internalization of the insulin receptor. The chain is Lysosomal cobalamin transport escort protein LMBD1 (lmbrd1) from Xenopus tropicalis (Western clawed frog).